Here is a 680-residue protein sequence, read N- to C-terminus: Tumor protein 63 (680 aa).

Positions 1-107 (MNFETSRCAT…MQDSDLSDPM (107 aa)) are transcription activation. The span at 123-157 (QIQNGSSSTSPYNTDHAQNSVTAPSPYAQPSSTFD) shows a compositional bias: polar residues. Positions 123-171 (QIQNGSSSTSPYNTDHAQNSVTAPSPYAQPSSTFDALSPSPAIPSNTDY) are disordered. Residues 170-362 (DYPGPHSFDV…KADEDSIRKQ (193 aa)) mediate DNA binding. The Zn(2+) site is built by Cys-244, His-247, Cys-308, and Cys-312. A compositionally biased stretch (basic and acidic residues) spans 351-360 (DRKADEDSIR). 2 disordered regions span residues 351–393 (DRKA…IKKR) and 436–472 (RQQQQQQHQHLLQKQTSMQSQSSYGNSSPPLNKMNSM). The interval 352–388 (RKADEDSIRKQQVSDSAKNGDGTKRPFRQNTHGIQMT) is interaction with HIPK2. Polar residues predominate over residues 379-389 (RQNTHGIQMTS). An oligomerization region spans residues 394–443 (RSPDDELLYLPVRGRETYEMLLKIKESLELMQYLPQHTIETYRQQQQQQH). Low complexity predominate over residues 437 to 463 (QQQQQQHQHLLQKQTSMQSQSSYGNSS). In terms of domain architecture, SAM spans 541 to 607 (PPYPTDCSIV…WKGILDHRQL (67 aa)). Residues 610-680 (FSSPPHLLRT…KQQRIKEEGE (71 aa)) form a transactivation inhibition region. Residue Lys-676 forms a Glycyl lysine isopeptide (Lys-Gly) (interchain with G-Cter in SUMO) linkage.

The protein belongs to the p53 family. In terms of assembly, binds DNA as a homotetramer. Isoform composition of the tetramer may determine transactivation activity. Interacts with HIPK2. Interacts with SSRP1, leading to stimulate coactivator activity. Interacts with PDS5A. Interacts (via activation domain) with NOC2L. Interacts with WWP1. Zn(2+) is required as a cofactor. Post-translationally, may be sumoylated. Ubiquitinated. Polyubiquitination involves WWP1 and leads to proteasomal degradation of this protein. As to expression, widely expressed, notably in thymus, prostate, placenta and skeletal muscle, although the precise isoform varies according to tissue type. Progenitor cell layers of skin, breast and prostate express high levels of DeltaN-type isoforms.

Its subcellular location is the nucleus. Its function is as follows. Acts as a sequence specific DNA binding transcriptional activator or repressor. The isoforms contain a varying set of transactivation and auto-regulating transactivation inhibiting domains thus showing an isoform specific activity. May be required in conjunction with TP73/p73 for initiation of p53/TP53 dependent apoptosis in response to genotoxic insults and the presence of activated oncogenes. Involved in Notch signaling by probably inducing JAG1 and JAG2. Activates transcription of the p21 promoter. Activates RIPK4 transcription. Plays a role in the regulation of epithelial morphogenesis. The ratio of DeltaN-type and TA*-type isoforms may govern the maintenance of epithelial stem cell compartments and regulate the initiation of epithelial stratification from the undifferentiated embryonal ectoderm. Required for limb formation from the apical ectodermal ridge. This chain is Tumor protein 63 (Tp63), found in Mus musculus (Mouse).